A 486-amino-acid chain; its full sequence is Glycogen synthase (486 aa).

Lys-20 lines the ADP-alpha-D-glucose pocket.

The protein belongs to the glycosyltransferase 1 family. Bacterial/plant glycogen synthase subfamily.

It carries out the reaction [(1-&gt;4)-alpha-D-glucosyl](n) + ADP-alpha-D-glucose = [(1-&gt;4)-alpha-D-glucosyl](n+1) + ADP + H(+). Its pathway is glycan biosynthesis; glycogen biosynthesis. In terms of biological role, synthesizes alpha-1,4-glucan chains using ADP-glucose. In Aeromonas hydrophila subsp. hydrophila (strain ATCC 7966 / DSM 30187 / BCRC 13018 / CCUG 14551 / JCM 1027 / KCTC 2358 / NCIMB 9240 / NCTC 8049), this protein is Glycogen synthase.